The chain runs to 376 residues: NAD-capped RNA hydrolase (376 aa).

Zn(2+) contacts are provided by Cys182, Cys185, Cys200, and Cys211. Substrate is bound by residues Tyr222, Ala258–Phe260, Glu274, Glu278, and Glu321. The Nudix hydrolase domain maps to Pro223–Pro351. Ala258, Glu274, Glu278, and Glu321 together coordinate Mg(2+). The short motif at Gly259–Gly280 is the Nudix box element. Positions Val374–Met376 match the Microbody targeting signal motif.

It belongs to the Nudix hydrolase family. NudC subfamily. As to quaternary structure, homodimer. Mg(2+) serves as cofactor. The cofactor is Zn(2+).

The enzyme catalyses a 5'-end NAD(+)-phospho-ribonucleoside in mRNA + H2O = a 5'-end phospho-adenosine-phospho-ribonucleoside in mRNA + beta-nicotinamide D-ribonucleotide + 2 H(+). It catalyses the reaction NAD(+) + H2O = beta-nicotinamide D-ribonucleotide + AMP + 2 H(+). The catalysed reaction is NADH + H2O = reduced beta-nicotinamide D-ribonucleotide + AMP + 2 H(+). In terms of biological role, mRNA decapping enzyme that specifically removes the nicotinamide adenine dinucleotide (NAD) cap from a subset of mRNAs by hydrolyzing the diphosphate linkage to produce nicotinamide mononucleotide (NMN) and 5' monophosphate mRNA. The NAD-cap is present at the 5'-end of some RNAs; in contrast to the canonical N7 methylguanosine (m7G) cap, the NAD cap promotes mRNA decay. Mediates the hydrolysis of some nucleoside diphosphate derivatives. In Schizosaccharomyces pombe (strain 972 / ATCC 24843) (Fission yeast), this protein is NAD-capped RNA hydrolase.